A 398-amino-acid chain; its full sequence is Acetate kinase (398 aa).

N7 lines the Mg(2+) pocket. K14 lines the ATP pocket. R92 is a binding site for substrate. Residue D149 is the Proton donor/acceptor of the active site. Residues 209-213 (HLGNG), 284-286 (DFR), and 332-336 (GVGEN) each bind ATP. E385 lines the Mg(2+) pocket.

Belongs to the acetokinase family. Homodimer. Mg(2+) serves as cofactor. Mn(2+) is required as a cofactor.

It localises to the cytoplasm. It carries out the reaction acetate + ATP = acetyl phosphate + ADP. Its pathway is metabolic intermediate biosynthesis; acetyl-CoA biosynthesis; acetyl-CoA from acetate: step 1/2. Functionally, catalyzes the formation of acetyl phosphate from acetate and ATP. Can also catalyze the reverse reaction. In Clostridioides difficile (strain 630) (Peptoclostridium difficile), this protein is Acetate kinase.